The following is a 384-amino-acid chain: Cyclohexane-1-carbonyl-CoA dehydrogenase (384 aa).

Belongs to the acyl-CoA dehydrogenase family. As to quaternary structure, homotetramer. It depends on FAD as a cofactor.

It carries out the reaction cyclohexane-1-carbonyl-CoA + oxidized [electron-transfer flavoprotein] + H(+) = cyclohex-1-ene-1-carbonyl-CoA + reduced [electron-transfer flavoprotein]. Its function is as follows. Mediates the conversion of cyclohexane-1-carbonyl-CoA (ChCoA) into cyclohex-1-ene-1-carbonyl-CoA in biosynthesis of cyclohexane-1-carboxylate, a by-product produced during fermentation of benzoate and crotonate to acetate. The chain is Cyclohexane-1-carbonyl-CoA dehydrogenase from Syntrophus aciditrophicus (strain SB).